Consider the following 314-residue polypeptide: Nodulation protein D 2 (314 aa).

Positions 6–63 constitute an HTH lysR-type domain; sequence LDLNLLVVLDALMTERNLTAAARSINLSQPAMSAAVARLRTNFRDDLFAMAGREFIPT. Positions 23–42 form a DNA-binding region, H-T-H motif; it reads LTAAARSINLSQPAMSAAVA.

This sequence belongs to the LysR transcriptional regulatory family.

Its function is as follows. NodD regulates the expression of the nodABCFE genes which encode other nodulation proteins. NodD is also a negative regulator of its own expression. Binds flavonoids as inducers. This is Nodulation protein D 2 (nodD2) from Rhizobium tropici.